The sequence spans 408 residues: UPF0761 membrane protein Avin_36810 (408 aa).

6 helical membrane-spanning segments follow: residues 33–53 (YTAL…LSVV), 92–112 (HLTW…LMTV), 132–152 (FLLH…GFAL), 174–194 (LLKV…YVAV), 209–229 (LFAA…VALF), and 238–258 (AFAA…IVLL).

The protein belongs to the UPF0761 family.

Its subcellular location is the cell inner membrane. The chain is UPF0761 membrane protein Avin_36810 from Azotobacter vinelandii (strain DJ / ATCC BAA-1303).